The sequence spans 237 residues: 7-cyano-7-deazaguanine synthase (237 aa).

ATP is bound at residue 9-19; sequence YSGGLDSTTCL. Positions 189, 199, 202, and 205 each coordinate Zn(2+).

Belongs to the QueC family. It depends on Zn(2+) as a cofactor.

The enzyme catalyses 7-carboxy-7-deazaguanine + NH4(+) + ATP = 7-cyano-7-deazaguanine + ADP + phosphate + H2O + H(+). It functions in the pathway purine metabolism; 7-cyano-7-deazaguanine biosynthesis. In terms of biological role, catalyzes the ATP-dependent conversion of 7-carboxy-7-deazaguanine (CDG) to 7-cyano-7-deazaguanine (preQ(0)). The chain is 7-cyano-7-deazaguanine synthase from Geobacter metallireducens (strain ATCC 53774 / DSM 7210 / GS-15).